The following is a 373-amino-acid chain: CXADR-like membrane protein (373 aa).

The N-terminal stretch at 1-17 (MSLFFLWLVSYYVGTLG) is a signal peptide. Ig-like C2-type domains are found at residues 18–126 (THTE…VILK) and 134–223 (PKCE…VRVT). The Extracellular portion of the chain corresponds to 18 to 234 (THTEIKRVAE…QYVQSIGMVA (217 aa)). Cystine bridges form between Cys-34–Cys-110 and Cys-152–Cys-207. N-linked (GlcNAc...) asparagine glycosylation is found at Asn-73 and Asn-196. A helical membrane pass occupies residues 235–255 (GAVTGIVAGALLIFLLIWLLI). Over 256–373 (RRKSKDRYEE…PSQSKAFQTV (118 aa)) the chain is Cytoplasmic. Residues 263–280 (YEEEDRPNEIREDAEAPR) are compositionally biased toward basic and acidic residues. Positions 263–373 (YEEEDRPNEI…PSQSKAFQTV (111 aa)) are disordered. Low complexity-rich tracts occupy residues 287 to 313 (SSSS…ASRS), 321 to 332 (AAPQQPGLAPQA), and 353 to 363 (LTKAETTLSTT). Polar residues predominate over residues 364–373 (PSQSKAFQTV).

In terms of tissue distribution, predominantly expressed in epithelial cells within different tissues and in the white adipose tissue. Expressed at high levels in the heart and brain, at intermediate levels in the lung, skeletal muscle, kidney and testis and at low levels in the liver and spleen.

It is found in the cell junction. Its subcellular location is the tight junction. It localises to the cell membrane. Functionally, may be involved in the cell-cell adhesion. May play a role in adipocyte differentiation and development of obesity. Is required for normal small intestine development. The sequence is that of CXADR-like membrane protein (Clmp) from Mus musculus (Mouse).